Consider the following 486-residue polypeptide: High-affinity iron permease fer2 (486 aa).

Helical transmembrane passes span 76–96 and 113–133; these read IVLL…AAFL and LWEG…SLAI. Residue Asn-174 is glycosylated (N-linked (GlcNAc...) asparagine). The disordered stretch occupies residues 175–209; the sequence is HSDDSASASSSSARQAAEEEAGTKTTRTEKLNPLE. A compositionally biased stretch (low complexity) spans 179–189; sequence SASASSSSARQ. Helical transmembrane passes span 252-272, 283-303, and 308-328; these read ALFT…VVFI, SIPL…FLIF, and LVSV…IASG. The N-linked (GlcNAc...) asparagine glycan is linked to Asn-393. The helical transmembrane segment at 400-420 threads the bilayer; it reads SVFMYIGYWFAVAGYLWYQIW. N-linked (GlcNAc...) asparagine glycosylation occurs at Asn-438. The disordered stretch occupies residues 441–486; the sequence is IQARQRKQEKAHQRQLREADQEEHGHSSNSDKQQHPSEAGPSTLSH. Positions 446-466 are enriched in basic and acidic residues; that stretch reads RKQEKAHQRQLREADQEEHGH.

Belongs to the oxidase-dependent Fe transporter (OFeT) (TC 9.A.10.1) family.

It is found in the cell membrane. Permease for high affinity iron uptake. This is High-affinity iron permease fer2 from Mycosarcoma maydis (Corn smut fungus).